The primary structure comprises 353 residues: UPF0283 membrane protein YcjF (353 aa).

3 helical membrane passes run Met-70–Thr-90, Val-100–Val-120, and Glu-213–Trp-233.

The protein belongs to the UPF0283 family.

Its subcellular location is the cell inner membrane. This is UPF0283 membrane protein YcjF from Escherichia coli O45:K1 (strain S88 / ExPEC).